Here is a 118-residue protein sequence, read N- to C-terminus: NADH-quinone oxidoreductase subunit A (118 aa).

Helical transmembrane passes span 6-26 (LIIGIFLIASFIFGMVVLLTA), 61-81 (FMYGLVFLLFDVETVFLLPWA), and 87-107 (LGLFALFEMVIFIGILIIGLW).

This sequence belongs to the complex I subunit 3 family. As to quaternary structure, NDH-1 is composed of 14 different subunits. Subunits NuoA, H, J, K, L, M, N constitute the membrane sector of the complex.

The protein resides in the cell membrane. It catalyses the reaction a quinone + NADH + 5 H(+)(in) = a quinol + NAD(+) + 4 H(+)(out). NDH-1 shuttles electrons from NADH, via FMN and iron-sulfur (Fe-S) centers, to quinones in the respiratory chain. The immediate electron acceptor for the enzyme in this species is believed to be a menaquinone. Couples the redox reaction to proton translocation (for every two electrons transferred, four hydrogen ions are translocated across the cytoplasmic membrane), and thus conserves the redox energy in a proton gradient. This Clostridium beijerinckii (strain ATCC 51743 / NCIMB 8052) (Clostridium acetobutylicum) protein is NADH-quinone oxidoreductase subunit A.